Consider the following 421-residue polypeptide: uncharacterized protein (421 aa).

Residue Lys249 is modified to N6-(pyridoxal phosphate)lysine.

It belongs to the class-I pyridoxal-phosphate-dependent aminotransferase family. The cofactor is pyridoxal 5'-phosphate.

Its subcellular location is the cytoplasm. This is an uncharacterized protein from Schizosaccharomyces pombe (strain 972 / ATCC 24843) (Fission yeast).